The sequence spans 193 residues: 3-isopropylmalate dehydratase small subunit (193 aa).

The protein belongs to the LeuD family. LeuD type 1 subfamily. Heterodimer of LeuC and LeuD.

The enzyme catalyses (2R,3S)-3-isopropylmalate = (2S)-2-isopropylmalate. It participates in amino-acid biosynthesis; L-leucine biosynthesis; L-leucine from 3-methyl-2-oxobutanoate: step 2/4. Its function is as follows. Catalyzes the isomerization between 2-isopropylmalate and 3-isopropylmalate, via the formation of 2-isopropylmaleate. The protein is 3-isopropylmalate dehydratase small subunit of Bacillus cereus (strain AH820).